The following is a 315-amino-acid chain: GTP cyclohydrolase MptA (315 aa).

This sequence belongs to the GTP cyclohydrolase IV family. As to quaternary structure, homodimer. Requires Fe(2+) as cofactor.

It catalyses the reaction GTP + H2O = 7,8-dihydroneopterin 2',3'-cyclic phosphate + formate + diphosphate + H(+). It participates in cofactor biosynthesis; 5,6,7,8-tetrahydromethanopterin biosynthesis. Converts GTP to 7,8-dihydro-D-neopterin 2',3'-cyclic phosphate, the first intermediate in the biosynthesis of coenzyme methanopterin. The polypeptide is GTP cyclohydrolase MptA (Methanococcus maripaludis (strain C7 / ATCC BAA-1331)).